The sequence spans 159 residues: MNLTLNLIQLQTIEMRVHMDCVGCESRVKNALQKMRGVDAVEIDMVQQKVTVTGYADQKKVLKKVRKTGRRAELWQLPYNPDHMGGSSSNGGYFYNPQGCNGPINHAAPVPTSSYNYYKHGYDSNDYSSYRHHPVHASIFSHQTGSKFSDENPNACSIM.

The region spanning 10-73 is the HMA domain; sequence LQTIEMRVHM…KVRKTGRRAE (64 aa). Positions 21 and 24 each coordinate a metal cation. Cys156 carries the cysteine methyl ester modification. The S-farnesyl cysteine moiety is linked to residue Cys156. Positions 157 to 159 are cleaved as a propeptide — removed in mature form; it reads SIM.

It belongs to the HIPP family.

Its function is as follows. Heavy-metal-binding protein. This chain is Heavy metal-associated isoprenylated plant protein 28, found in Arabidopsis thaliana (Mouse-ear cress).